Consider the following 427-residue polypeptide: Lupus La protein homolog B (427 aa).

The region spanning 6–98 is the HTH La-type RNA-binding domain; that stretch reads DKEQLDLDTK…RRSPAKPLPE (93 aa). The region spanning 110-202 is the RRM domain; it reads RSVYIKGFPT…EERKLNKSEE (93 aa). 2 disordered regions span residues 193–220 and 319–427; these read EERK…AEDA and EGKQ…VGDQ. One can recognise a xRRM domain in the interval 226-348; it reads EERVGCLLKF…KGRGGKGNDS (123 aa). A Nuclear localization signal motif is present at residues 315–331; the sequence is KKIMEGKQESFNKRKGR. Basic residues-rich tracts occupy residues 327–342 and 351–360; these read KRKG…KGRG and RKKIQFQGKK. The span at 365 to 376 shows a compositional bias: acidic residues; the sequence is SSDDEDDMEESE. Residues 405–427 are compositionally biased toward basic and acidic residues; that stretch reads RALDDKAEDGPAVKQSKTEVGDQ.

In terms of processing, phosphorylated.

It is found in the nucleus. La protein plays a role in the transcription of RNA polymerase III. It is most probably a transcription termination factor. Binds to the 3' termini of virtually all nascent polymerase III transcripts. This chain is Lupus La protein homolog B (ssb-b), found in Xenopus laevis (African clawed frog).